The chain runs to 54 residues: MAGKRDKVRMISTAGTGHFYTTDKNKKNTPGKMEFSKYDPVVRKHVPYKEGKIK.

The protein belongs to the bacterial ribosomal protein bL33 family.

The chain is Large ribosomal subunit protein bL33 from Stenotrophomonas maltophilia (strain R551-3).